Here is a 450-residue protein sequence, read N- to C-terminus: Succinate-semialdehyde dehydrogenase (450 aa).

An NADP(+)-binding site is contributed by Trp119–Asn120. A substrate-binding site is contributed by Arg128. Residues Lys143–Lys146 and Gly197–Ser198 each bind NADP(+). Glu219 functions as the Proton acceptor in the catalytic mechanism. Leu220 is a binding site for NADP(+). Arg247 and Cys253 together coordinate substrate. Cys253 functions as the Nucleophile in the catalytic mechanism. NADP(+) is bound at residue Glu350. Ser410 provides a ligand contact to substrate.

This sequence belongs to the aldehyde dehydrogenase family. As to quaternary structure, homodimer.

The enzyme catalyses succinate semialdehyde + NAD(+) + H2O = succinate + NADH + 2 H(+). It carries out the reaction succinate semialdehyde + NADP(+) + H2O = succinate + NADPH + 2 H(+). It participates in alkaloid degradation; nicotine degradation. Catalyzes the NAD(P)(+)-dependent oxidation of succinate semialdehyde to succinate, which may enter the citric acid cycle. Is involved in the catabolism of 4-methylaminobutanoate produced from nicotine. Acts preferentially with NADP(+) as cosubstrate but can also use NAD(+). To a lesser extent, is active also towards butyraldehyde (8.5% of the activity observed with succinate semialdehyde) and propionaldehyde (1.6% of the activity observed with succinate semialdehyde) as substrates. In Paenarthrobacter nicotinovorans (Arthrobacter nicotinovorans), this protein is Succinate-semialdehyde dehydrogenase (sad).